Consider the following 321-residue polypeptide: Peptide transport system permease protein SapB (321 aa).

8 helical membrane passes run 8–28, 41–61, 82–102, 117–137, 150–170, 180–200, 249–269, and 289–309; these read HILW…VILL, IYIG…GITY, CFIT…ISAV, YVGL…VAAL, LLYE…FMEV, ILQH…MEII, VFTL…WPGI, and VIVI…FTFI. Residues 75–303 enclose the ABC transmembrane type-1 domain; sequence LPPTLELCFI…VCIILIDTFT (229 aa).

The protein belongs to the binding-protein-dependent transport system permease family. OppBC subfamily.

Its subcellular location is the cell inner membrane. Its function is as follows. Involved in a peptide intake transport system that plays a role in the resistance to antimicrobial peptides. The chain is Peptide transport system permease protein SapB (sapB) from Haemophilus influenzae (strain ATCC 51907 / DSM 11121 / KW20 / Rd).